Reading from the N-terminus, the 214-residue chain is Membrane antigen containing repeating peptides (214 aa).

4 tandem repeats follow at residues 1–14 (QETS…EETL), 15–28 (QETS…EETL), 29–42 (QETS…EETL), and 43–56 (QETS…EETL). The interval 1–31 (QETSAKLADTEETLQETSAKLADTEETLQET) is disordered. Residues 1–56 (QETSAKLADTEETLQETSAKLADTEETLQETSAKLADTEETLQETSAKLADTEETL) are 4 X 14 AA tandem repeats. A disordered region spans residues 180-214 (CSLHPTPRRLGDVSNRENSIENKTRSASRLSGRLF). Positions 188-203 (RLGDVSNRENSIENKT) are enriched in basic and acidic residues.

It localises to the membrane. The sequence is that of Membrane antigen containing repeating peptides from Leishmania major.